Here is a 293-residue protein sequence, read N- to C-terminus: F-box only protein 6 (293 aa).

The F-box domain occupies 10-57 (LDSINELPENILLELFTHVPARQLLLNCRLVCSLWRDLIDLMTLWKRK). The region spanning 78 to 259 (FYFLRSLHRN…VTNSSIVVSP (182 aa)) is the FBA domain. Residue Ser258 is modified to Phosphoserine. Residues 261-271 (MTRNQASSEAQ) show a composition bias toward polar residues. The disordered stretch occupies residues 261–285 (MTRNQASSEAQPGQKHGQEEAAQSP). At Ser284 the chain carries Phosphoserine.

Interacts with VCP. Part of a SCF (SKP1-cullin-F-box) protein ligase complex. Interacts with CHEK1 and CUL1.

It localises to the cytoplasm. It participates in protein modification; protein ubiquitination. Substrate-recognition component of some SCF (SKP1-CUL1-F-box protein)-type E3 ubiquitin ligase complexes. Involved in endoplasmic reticulum-associated degradation pathway (ERAD) for misfolded lumenal proteins by recognizing and binding sugar chains on unfolded glycoproteins that are retrotranslocated into the cytosol and promoting their ubiquitination and subsequent degradation. Able to recognize and bind denatured glycoproteins, which are modified with not only high-mannose but also complex-type oligosaccharides. Also recognizes sulfated glycans. Also involved in DNA damage response by specifically recognizing activated CHEK1 (phosphorylated on 'Ser-345'), promoting its ubiquitination and degradation. Ubiquitination of CHEK1 is required to ensure that activated CHEK1 does not accumulate as cells progress through S phase, or when replication forks encounter transient impediments during normal DNA replication. The polypeptide is F-box only protein 6 (FBXO6) (Homo sapiens (Human)).